Consider the following 206-residue polypeptide: MSANELTSGDFTESGEPFKLFAEWLKEAEASEPNDPNAVALATVDEDGLPNVRMVLLKGFDDDGFVFYTNFESQKGREILGQRKAAMCFHWKSLRRQVRLRGPVEIVSDAEADAYFKTRARGSRIGAWASKQSRPLESRFALEKAVAEYTARYALGEIPRPAHWSGFRIRPTSIEFWKDQAFRLHDRIEFRRPSPVGAWEKVRMYP.

FMN is bound by residues 53–58, 68–69, Lys75, and Gln97; these read RMVLLK and YT. Lys58 contacts substrate. Positions 115, 119, and 123 each coordinate substrate. FMN-binding positions include 132-133 and Trp177; that span reads QS. 183–185 provides a ligand contact to substrate; that stretch reads RLH. Arg187 contacts FMN.

This sequence belongs to the pyridoxamine 5'-phosphate oxidase family. As to quaternary structure, homodimer. It depends on FMN as a cofactor.

It carries out the reaction pyridoxamine 5'-phosphate + O2 + H2O = pyridoxal 5'-phosphate + H2O2 + NH4(+). It catalyses the reaction pyridoxine 5'-phosphate + O2 = pyridoxal 5'-phosphate + H2O2. Its pathway is cofactor metabolism; pyridoxal 5'-phosphate salvage; pyridoxal 5'-phosphate from pyridoxamine 5'-phosphate: step 1/1. It functions in the pathway cofactor metabolism; pyridoxal 5'-phosphate salvage; pyridoxal 5'-phosphate from pyridoxine 5'-phosphate: step 1/1. In terms of biological role, catalyzes the oxidation of either pyridoxine 5'-phosphate (PNP) or pyridoxamine 5'-phosphate (PMP) into pyridoxal 5'-phosphate (PLP). This is Pyridoxine/pyridoxamine 5'-phosphate oxidase from Rhizobium etli (strain CIAT 652).